Reading from the N-terminus, the 213-residue chain is Kynurenine formamidase (213 aa).

Residue tryptophan 20 participates in substrate binding. Zn(2+) is bound by residues histidine 50, histidine 54, and aspartate 56. Histidine 60 (proton donor/acceptor) is an active-site residue. Residues histidine 161 and glutamate 173 each coordinate Zn(2+).

This sequence belongs to the Cyclase 1 superfamily. KynB family. In terms of assembly, homodimer. Zn(2+) serves as cofactor.

It catalyses the reaction N-formyl-L-kynurenine + H2O = L-kynurenine + formate + H(+). It functions in the pathway amino-acid degradation; L-tryptophan degradation via kynurenine pathway; L-kynurenine from L-tryptophan: step 2/2. Its function is as follows. Catalyzes the hydrolysis of N-formyl-L-kynurenine to L-kynurenine, the second step in the kynurenine pathway of tryptophan degradation. This Pseudomonas aeruginosa (strain ATCC 15692 / DSM 22644 / CIP 104116 / JCM 14847 / LMG 12228 / 1C / PRS 101 / PAO1) protein is Kynurenine formamidase.